Reading from the N-terminus, the 418-residue chain is Imidazolonepropionase (418 aa).

The Fe(3+) site is built by H80 and H82. Residues H80 and H82 each coordinate Zn(2+). The 4-imidazolone-5-propanoate site is built by R89, Y152, and H185. Y152 contributes to the N-formimidoyl-L-glutamate binding site. A Fe(3+)-binding site is contributed by H250. H250 serves as a coordination point for Zn(2+). Q253 contacts 4-imidazolone-5-propanoate. D325 contacts Fe(3+). D325 lines the Zn(2+) pocket. Residues N327 and G329 each coordinate N-formimidoyl-L-glutamate. 4-imidazolone-5-propanoate is bound at residue S330.

The protein belongs to the metallo-dependent hydrolases superfamily. HutI family. It depends on Zn(2+) as a cofactor. Requires Fe(3+) as cofactor.

The protein resides in the cytoplasm. It catalyses the reaction 4-imidazolone-5-propanoate + H2O = N-formimidoyl-L-glutamate. It functions in the pathway amino-acid degradation; L-histidine degradation into L-glutamate; N-formimidoyl-L-glutamate from L-histidine: step 3/3. In terms of biological role, catalyzes the hydrolytic cleavage of the carbon-nitrogen bond in imidazolone-5-propanoate to yield N-formimidoyl-L-glutamate. It is the third step in the universal histidine degradation pathway. The polypeptide is Imidazolonepropionase (Solibacter usitatus (strain Ellin6076)).